The sequence spans 262 residues: Ribosomal RNA small subunit methyltransferase A (262 aa).

Residues Asn12, Leu14, Gly38, Glu60, Asp83, and Asn102 each contribute to the S-adenosyl-L-methionine site.

The protein belongs to the class I-like SAM-binding methyltransferase superfamily. rRNA adenine N(6)-methyltransferase family. RsmA subfamily.

The protein localises to the cytoplasm. It catalyses the reaction adenosine(1518)/adenosine(1519) in 16S rRNA + 4 S-adenosyl-L-methionine = N(6)-dimethyladenosine(1518)/N(6)-dimethyladenosine(1519) in 16S rRNA + 4 S-adenosyl-L-homocysteine + 4 H(+). Functionally, specifically dimethylates two adjacent adenosines (A1518 and A1519) in the loop of a conserved hairpin near the 3'-end of 16S rRNA in the 30S particle. May play a critical role in biogenesis of 30S subunits. This Pelagibacter ubique (strain HTCC1062) protein is Ribosomal RNA small subunit methyltransferase A.